The chain runs to 530 residues: Light-independent protochlorophyllide reductase subunit B (530 aa).

Position 36 (Asp36) interacts with [4Fe-4S] cluster. Asp287 functions as the Proton donor in the catalytic mechanism. 422–423 (GL) is a binding site for substrate. The tract at residues 453 to 472 (PAVQTASSEPQPSAIETPSA) is disordered. A compositionally biased stretch (polar residues) spans 454–463 (AVQTASSEPQ).

It belongs to the ChlB/BchB/BchZ family. Protochlorophyllide reductase is composed of three subunits; BchL, BchN and BchB. Forms a heterotetramer of two BchB and two BchN subunits. The cofactor is [4Fe-4S] cluster.

The enzyme catalyses chlorophyllide a + oxidized 2[4Fe-4S]-[ferredoxin] + 2 ADP + 2 phosphate = protochlorophyllide a + reduced 2[4Fe-4S]-[ferredoxin] + 2 ATP + 2 H2O. Its pathway is porphyrin-containing compound metabolism; bacteriochlorophyll biosynthesis (light-independent). Functionally, component of the dark-operative protochlorophyllide reductase (DPOR) that uses Mg-ATP and reduced ferredoxin to reduce ring D of protochlorophyllide (Pchlide) to form chlorophyllide a (Chlide). This reaction is light-independent. The NB-protein (BchN-BchB) is the catalytic component of the complex. The sequence is that of Light-independent protochlorophyllide reductase subunit B from Rhodopseudomonas palustris (strain BisB18).